Consider the following 422-residue polypeptide: Putidaredoxin reductase CamA (422 aa).

A15, D37, K50, V83, and R134 together coordinate FAD. NAD(+) is bound at residue 156–165; the sequence is GGGYIGLEVA. FAD-binding residues include D284 and V302.

Belongs to the FAD-dependent oxidoreductase family. Homodimer or monomer. FAD is required as a cofactor.

The catalysed reaction is 2 reduced [2Fe-2S]-[putidaredoxin] + NAD(+) + H(+) = 2 oxidized [2Fe-2S]-[putidaredoxin] + NADH. It participates in terpene metabolism; (R)-camphor degradation. Its function is as follows. The oxidation of camphor by cytochrome P450-CAM CamC requires the participation of the flavoprotein, putidaredoxin reductase CamA, and the iron-sulfur protein, putidaredoxin CamB, to mediate the transfer of electrons from NADH to P450 for oxygen activation. This is Putidaredoxin reductase CamA from Pseudomonas putida (Arthrobacter siderocapsulatus).